Reading from the N-terminus, the 161-residue chain is Nucleotide-binding protein BMASAVP1_A0673 (161 aa).

It belongs to the YajQ family.

In terms of biological role, nucleotide-binding protein. The sequence is that of Nucleotide-binding protein BMASAVP1_A0673 from Burkholderia mallei (strain SAVP1).